The following is a 239-amino-acid chain: Homeobox-leucine zipper protein HOX12 (239 aa).

The interval 22 to 65 (PEAATSGGEQKKARQRRRRKVKPEAAAALAGESGGDEQAKKRRL) is disordered. Residues 58 to 117 (EQAKKRRLSDEQARFLEMSFKKERKLETPRKVQLAAELGLDAKQVAVWFQNRRARHKSKL) constitute a DNA-binding region (homeobox). A coiled-coil region spans residues 107-168 (QNRRARHKSK…KLAAVAAATT (62 aa)).

This sequence belongs to the HD-ZIP homeobox family. Class I subfamily. As to expression, expressed in seedlings, roots, stems, leaf sheaths and panicles.

The protein resides in the nucleus. Its function is as follows. Probable transcription factor. In Oryza sativa subsp. indica (Rice), this protein is Homeobox-leucine zipper protein HOX12 (HOX12).